Reading from the N-terminus, the 178-residue chain is PRA1 family protein 2 (178 aa).

At 1 to 41 (MSEVRLPPLRALDDFVLGSARLAAPDPCDPQRWCHRVINNL) the chain is on the cytoplasmic side. Residues 42–62 (LYYQTNYLLCFGIGLALAGYV) form a helical membrane-spanning segment. Residues 63–64 (RP) lie on the Extracellular side of the membrane. Residues 65 to 85 (LHTLLSALVVAVALGVLVWAA) traverse the membrane as a helical segment. Over 86–96 (ETRAAVRRCRR) the chain is Cytoplasmic. Residues 97–119 (SHPAACLAAVLAVGLLVLWVAGG) form a helical membrane-spanning segment. Over 120–122 (ACT) the chain is Extracellular. A helical membrane pass occupies residues 123 to 140 (FLFSIAGPVLLILVHASL). Over 141–178 (RLRNLKNKIENKIESIGLKRTPMGLLLEALGQEQEAGS) the chain is Cytoplasmic.

This sequence belongs to the PRA1 family. In terms of assembly, interacts with CCR5 and GDE1. As to expression, strong expression in the brain, small intestine, lung, spleen, and pancreas as well as in tumor tissues of the breast, colon, lung and ovary, with a weaker expression in normal tissues of the same patient. High expression in neuroblastic tumors. Strongly expressed in Purkinje cells and more moderately in cells of the molecular and the granular layers in the cerebellum. Detected in neuronal cells, but not in non-neuronal cells in the cerebral cortex, hippocampus, and lateral ventricles.

The protein localises to the endosome membrane. Its function is as follows. May be involved in ER/Golgi transport and vesicular traffic. Plays a proapoptotic role in cerulenin-induced neuroblastoma apoptosis. The polypeptide is PRA1 family protein 2 (PRAF2) (Homo sapiens (Human)).